Here is a 31-residue protein sequence, read N- to C-terminus: Cytochrome b6-f complex subunit 6 (31 aa).

The helical transmembrane segment at 4 to 26 threads the bilayer; sequence ITSYFGFLLAASTITPALFIGLS.

The protein belongs to the PetL family. The 4 large subunits of the cytochrome b6-f complex are cytochrome b6, subunit IV (17 kDa polypeptide, PetD), cytochrome f and the Rieske protein, while the 4 small subunits are PetG, PetL, PetM and PetN. The complex functions as a dimer.

Its subcellular location is the plastid. The protein localises to the chloroplast thylakoid membrane. Component of the cytochrome b6-f complex, which mediates electron transfer between photosystem II (PSII) and photosystem I (PSI), cyclic electron flow around PSI, and state transitions. PetL is important for photoautotrophic growth as well as for electron transfer efficiency and stability of the cytochrome b6-f complex. The chain is Cytochrome b6-f complex subunit 6 from Buxus microphylla (Littleleaf boxwood).